Consider the following 457-residue polypeptide: Cysteine--tRNA ligase (457 aa).

Residue Cys-31 coordinates Zn(2+). The 'HIGH' region signature appears at 33 to 43 (PTVYNYAHIGN). 3 residues coordinate Zn(2+): Cys-211, His-236, and Glu-240. The 'KMSKS' region signature appears at 269 to 273 (KMSKS). Lys-272 is an ATP binding site.

The protein belongs to the class-I aminoacyl-tRNA synthetase family. In terms of assembly, monomer. Zn(2+) is required as a cofactor.

Its subcellular location is the cytoplasm. The catalysed reaction is tRNA(Cys) + L-cysteine + ATP = L-cysteinyl-tRNA(Cys) + AMP + diphosphate. The chain is Cysteine--tRNA ligase from Xanthomonas campestris pv. campestris (strain ATCC 33913 / DSM 3586 / NCPPB 528 / LMG 568 / P 25).